A 325-amino-acid chain; its full sequence is Eukaryotic translation initiation factor 3 subunit I (325 aa).

WD repeat units follow at residues 8–47 (GHER…RLGT), 50–89 (GHTG…QLAL), 144–183 (CSDS…QLSN), 186–225 (EHTK…HLKT), and 283–324 (GHFG…FEFE).

Belongs to the eIF-3 subunit I family. In terms of assembly, component of the eukaryotic translation initiation factor 3 (eIF-3) complex, which is composed of 13 subunits: EIF3A, EIF3B, EIF3C, EIF3D, EIF3E, EIF3F, EIF3G, EIF3H, EIF3I, EIF3J, EIF3K, EIF3L and EIF3M.

The protein resides in the cytoplasm. In terms of biological role, component of the eukaryotic translation initiation factor 3 (eIF-3) complex, which is involved in protein synthesis of a specialized repertoire of mRNAs and, together with other initiation factors, stimulates binding of mRNA and methionyl-tRNAi to the 40S ribosome. The eIF-3 complex specifically targets and initiates translation of a subset of mRNAs involved in cell proliferation. This chain is Eukaryotic translation initiation factor 3 subunit I, found in Taeniopygia guttata (Zebra finch).